Reading from the N-terminus, the 289-residue chain is MHFQNVILTLQNYWASRGCVITQPIDVECGAGTFNPSTFLRVIGPEPWNVAYVEPSRRPTDGRYGENPNRLQHYFQFQVILKPSPDNVQELYLGSLRALGIDPAAHDIRFVEDDWESPTLGAWGLGWEVWLNGMEVTQFTYFQQVGGIDLAPTSVEITYGLERLCMYLQGKESVYDLDWNEHVTYGDIYHQNEVEQSKYNFERSDAAMLLHAFNAYETECRRLTEEGLLWPAYDYCLKCSHTFNLLDARGAISITERTGYIGRVRYLASGVARLYAAQREQLGYPMLRK.

This sequence belongs to the class-II aminoacyl-tRNA synthetase family. In terms of assembly, tetramer of two alpha and two beta subunits.

It localises to the cytoplasm. It carries out the reaction tRNA(Gly) + glycine + ATP = glycyl-tRNA(Gly) + AMP + diphosphate. The polypeptide is Glycine--tRNA ligase alpha subunit (Nitratidesulfovibrio vulgaris (strain ATCC 29579 / DSM 644 / CCUG 34227 / NCIMB 8303 / VKM B-1760 / Hildenborough) (Desulfovibrio vulgaris)).